Here is a 90-residue protein sequence, read N- to C-terminus: Bombyxin B-5 (90 aa).

An N-terminal signal peptide occupies residues 1–20 (MMKTAVMFILVVVISLTYSS). 3 disulfides stabilise this stretch: Cys30–Cys75, Cys42–Cys88, and Cys74–Cys79. The propeptide at 49–64 (GGAQYAPYWQETYLRS) is c peptide like.

This sequence belongs to the insulin family. As to quaternary structure, heterodimer of a B chain and an A chain linked by two disulfide bonds.

Its subcellular location is the secreted. Brain peptide responsible for activation of prothoracic glands to produce ecdysone in insects. This Bombyx mori (Silk moth) protein is Bombyxin B-5 (BBXB5).